The following is a 311-amino-acid chain: uncharacterized protein (311 aa).

9 consecutive transmembrane segments (helical) span residues 11–31, 34–54, 72–92, 101–121, 147–167, 198–218, 233–253, 257–277, and 279–299; these read LDNW…GYLS, VGIV…FLSL, LAIS…LFGI, HVIV…FVAQ, IEGI…WYLM, WFGV…FALS, GFIA…SIVI, FALA…TYLL, and TIPF…NVGP.

The protein resides in the cell membrane. This is an uncharacterized protein from Mycoplasma pneumoniae (strain ATCC 29342 / M129 / Subtype 1) (Mycoplasmoides pneumoniae).